A 138-amino-acid chain; its full sequence is Large ribosomal subunit protein bL17 (138 aa).

It belongs to the bacterial ribosomal protein bL17 family. In terms of assembly, part of the 50S ribosomal subunit. Contacts protein L32.

In Buchnera aphidicola subsp. Schizaphis graminum (strain Sg), this protein is Large ribosomal subunit protein bL17.